A 385-amino-acid polypeptide reads, in one-letter code: Odorant receptor 82a (385 aa).

Residues 1 to 32 lie on the Cytoplasmic side of the membrane; that stretch reads MGRLFQLQEYCLRAMGHKDDMDSTDSTALSLK. Residues 33–53 form a helical membrane-spanning segment; it reads HISSLIFVISAQYPLISYVAY. The Extracellular segment spans residues 54-62; the sequence is NRNDMEKVT. Residues 63–83 traverse the membrane as a helical segment; sequence ACLSVVFTNMLTVIKISTFLA. Topologically, residues 84–131 are cytoplasmic; it reads NRKDFWEMIHRFRKMHEQSASHIPRYREGLDYVAEANKLASFLGRAYC. The helical transmembrane segment at 132-152 threads the bilayer; the sequence is VSCGLTGLYFMLGPIVKIGVC. At 153–186 the chain is on the extracellular side; that stretch reads RWHGTTCDKELPMPMKFPFNDLESPGYEVCFLYT. Residues 187 to 207 form a helical membrane-spanning segment; the sequence is VLVTVVVVAYASAVDGLFISF. Residues 208 to 257 lie on the Cytoplasmic side of the membrane; it reads AINLRAHFQTLQRQIENWEFPSSEPDTQIRLKSIVEYHVLLLSLSRKLRS. A helical transmembrane segment spans residues 258–278; that stretch reads IYTPTVMGQFVITSLQVGVII. Over 279 to 290 the chain is Extracellular; the sequence is YQLVTNMDSVMD. Residues 291 to 311 traverse the membrane as a helical segment; it reads LLLYASFFGSIMLQLFIYCYG. At 312-357 the chain is on the cytoplasmic side; it reads GEIIKAESLQVDTAVRLSNWHLASPKTRTSLSLIILQSQKEVLIRA. A helical transmembrane segment spans residues 358–378; sequence GFFVASLANFVGICRTALSLI. The Extracellular portion of the chain corresponds to 379-385; the sequence is TLIKSIE.

Belongs to the insect chemoreceptor superfamily. Heteromeric odorant receptor channel (TC 1.A.69) family. Or1a subfamily. Interacts with Orco. Complexes exist early in the endomembrane system in olfactory sensory neurons (OSNs), coupling these complexes to the conserved ciliary trafficking pathway. Expressed in olfactory sensory neurons in the antenna.

It is found in the cell membrane. Functionally, odorant receptor which mediates acceptance or avoidance behavior, depending on its substrates. The odorant receptor repertoire encodes a large collection of odor stimuli that vary widely in identity, intensity, and duration. May form a complex with Orco to form odorant-sensing units, providing sensitive and prolonged odorant signaling and calcium permeability. This Drosophila melanogaster (Fruit fly) protein is Odorant receptor 82a (Or82a).